The following is a 328-amino-acid chain: Galactinol synthase 10 (328 aa).

Lys-106 is a catalytic residue. Mn(2+)-binding residues include Asp-122, Asp-124, and His-248.

It belongs to the glycosyltransferase 8 family. Galactosyltransferase subfamily. A divalent metal cation serves as cofactor.

Its subcellular location is the cytoplasm. The catalysed reaction is myo-inositol + UDP-alpha-D-galactose = alpha-D-galactosyl-(1-&gt;3)-1D-myo-inositol + UDP + H(+). Its function is as follows. Galactinol synthase involved in the biosynthesis of raffinose family oligosaccharides (RFOs) that function as osmoprotectants. May promote plant stress tolerance. In Arabidopsis thaliana (Mouse-ear cress), this protein is Galactinol synthase 10 (GOLS10).